The chain runs to 608 residues: Elongation factor 4 (608 aa).

The 183-residue stretch at Lys-11–Ser-193 folds into the tr-type G domain. Residues Asp-23–Thr-28 and Asn-140–Asp-143 each bind GTP.

This sequence belongs to the TRAFAC class translation factor GTPase superfamily. Classic translation factor GTPase family. LepA subfamily.

The protein resides in the cell membrane. The enzyme catalyses GTP + H2O = GDP + phosphate + H(+). Its function is as follows. Required for accurate and efficient protein synthesis under certain stress conditions. May act as a fidelity factor of the translation reaction, by catalyzing a one-codon backward translocation of tRNAs on improperly translocated ribosomes. Back-translocation proceeds from a post-translocation (POST) complex to a pre-translocation (PRE) complex, thus giving elongation factor G a second chance to translocate the tRNAs correctly. Binds to ribosomes in a GTP-dependent manner. In Listeria welshimeri serovar 6b (strain ATCC 35897 / DSM 20650 / CCUG 15529 / CIP 8149 / NCTC 11857 / SLCC 5334 / V8), this protein is Elongation factor 4.